The sequence spans 212 residues: Adenylate kinase (212 aa).

14 to 19 (GSGKGT) provides a ligand contact to ATP. The tract at residues 34-63 (STGDLFRKKISEDSQFAAQIQNYLSSGSYV) is NMP. Residues threonine 35, arginine 40, 61 to 63 (SYV), 89 to 92 (GYPR), and glutamine 96 contribute to the AMP site. The interval 126–163 (QRLFCQKCQKSYNLLLAKPKNGLKCDLDNTDLITRNDD) is LID. Residue arginine 127 coordinates ATP. Zn(2+) contacts are provided by cysteine 130 and cysteine 133. Position 136 to 137 (136 to 137 (SY)) interacts with ATP. Zn(2+)-binding residues include cysteine 150 and aspartate 153. AMP contacts are provided by arginine 160 and arginine 171. Glutamine 199 contacts ATP.

Belongs to the adenylate kinase family. Monomer.

Its subcellular location is the cytoplasm. The catalysed reaction is AMP + ATP = 2 ADP. Its pathway is purine metabolism; AMP biosynthesis via salvage pathway; AMP from ADP: step 1/1. In terms of biological role, catalyzes the reversible transfer of the terminal phosphate group between ATP and AMP. Plays an important role in cellular energy homeostasis and in adenine nucleotide metabolism. The polypeptide is Adenylate kinase (Mesomycoplasma hyopneumoniae (strain 7448) (Mycoplasma hyopneumoniae)).